The following is a 214-amino-acid chain: MADS-box protein CMB2 (214 aa).

An MADS-box domain is found at 3–58 (RGKLEIRKIENKTNRQVTFSKRRNGIMKKAQELTVLCDAKVSLLMISSTHKLHHYL). The 91-residue stretch at 84 to 174 (WERMQEQHRK…VMELEAKFRG (91 aa)) folds into the K-box domain.

In terms of tissue distribution, in flowers. Not found in vegetative tissues.

The protein localises to the nucleus. In Dianthus caryophyllus (Carnation), this protein is MADS-box protein CMB2 (CMB2).